Consider the following 177-residue polypeptide: Ubiquinol-cytochrome c reductase iron-sulfur subunit (177 aa).

Residues 18-38 traverse the membrane as a helical segment; it reads IVLTASSVAAVGAACAFWPII. Residues 88–175 enclose the Rieske domain; sequence ARAVKMSELI…YIFISDKKIR (88 aa). [2Fe-2S] cluster is bound by residues cysteine 120, histidine 122, cysteine 139, and histidine 142. Residues cysteine 125 and cysteine 141 are joined by a disulfide bond.

It belongs to the Rieske iron-sulfur protein family. As to quaternary structure, the main subunits of complex b-c1 are: cytochrome b, cytochrome c1 and the Rieske protein. The cofactor is [2Fe-2S] cluster.

It localises to the cell membrane. It catalyses the reaction a quinol + 2 Fe(III)-[cytochrome c](out) = a quinone + 2 Fe(II)-[cytochrome c](out) + 2 H(+)(out). In terms of biological role, component of the ubiquinol-cytochrome c reductase complex (complex III or cytochrome b-c1 complex), which is a respiratory chain that generates an electrochemical potential coupled to ATP synthesis. This Rickettsia prowazekii (strain Madrid E) protein is Ubiquinol-cytochrome c reductase iron-sulfur subunit (petA).